The chain runs to 513 residues: Teichoic acid ribitol-phosphate polymerase TarK (513 aa).

Belongs to the CDP-glycerol glycerophosphotransferase family.

It is found in the cell membrane. It catalyses the reaction 4-O-[di(2R)-glycerylphospho]-N-acetyl-beta-D-mannosaminyl-(1-&gt;4)-N-acetyl-alpha-D-glucosaminyl di-trans,octa-cis-undecaprenyl diphosphate + n CDP-L-ribitol = 4-O-[(D-ribitylphospho)(n)-di{(2R)-glycerylphospho}]-N-acetyl-beta-D-mannosaminyl-(1-&gt;4)-N-acetyl-alpha-D-glucosaminyl di-trans,octa-cis-undecaprenyl diphosphate + n CMP + n H(+). Its pathway is cell wall biogenesis; poly(ribitol phosphate) teichoic acid biosynthesis. Can catalyze the polymerization of the main chain of the major teichoic acid by sequential transfer of ribitol phosphate units from CDP-ribitol to the second glycerol phosphate attached to the disaccharide linkage unit. This chain is Teichoic acid ribitol-phosphate polymerase TarK (tarK), found in Staphylococcus aureus (strain NCTC 8325 / PS 47).